The following is a 570-amino-acid chain: Urease subunit alpha (570 aa).

Residues His-137, His-139, and Lys-220 each coordinate Ni(2+). An N6-carboxylysine modification is found at Lys-220. A substrate-binding site is contributed by His-222. The Ni(2+) site is built by His-249 and His-275. His-323 acts as the Proton donor in catalysis. Position 363 (Asp-363) interacts with Ni(2+).

This sequence belongs to the metallo-dependent hydrolases superfamily. Urease alpha subunit family. In terms of assembly, heterotrimer of UreA (gamma), UreB (beta) and UreC (alpha) subunits. Three heterotrimers associate to form the active enzyme. It depends on Ni cation as a cofactor. Carboxylation allows a single lysine to coordinate two nickel ions.

It is found in the cytoplasm. The catalysed reaction is urea + 2 H2O + H(+) = hydrogencarbonate + 2 NH4(+). It participates in nitrogen metabolism; urea degradation; CO(2) and NH(3) from urea (urease route): step 1/1. The sequence is that of Urease subunit alpha from Lachnoclostridium phytofermentans (strain ATCC 700394 / DSM 18823 / ISDg) (Clostridium phytofermentans).